The primary structure comprises 330 residues: Ferredoxin--NADP reductase 2 (330 aa).

7 residues coordinate FAD: glutamate 37, glutamine 45, tyrosine 50, valine 90, phenylalanine 124, aspartate 286, and threonine 327.

It belongs to the ferredoxin--NADP reductase type 2 family. In terms of assembly, homodimer. It depends on FAD as a cofactor.

The catalysed reaction is 2 reduced [2Fe-2S]-[ferredoxin] + NADP(+) + H(+) = 2 oxidized [2Fe-2S]-[ferredoxin] + NADPH. This chain is Ferredoxin--NADP reductase 2, found in Shouchella clausii (strain KSM-K16) (Alkalihalobacillus clausii).